A 251-amino-acid polypeptide reads, in one-letter code: NADPH-dependent oxidoreductase (251 aa).

The protein belongs to the flavin oxidoreductase frp family. It depends on FMN as a cofactor.

Its function is as follows. Reduces FMN, organic nitro compounds and disulfide DTNB. Involved in maintenance of the cellular redox state and the disulfide stress response. This chain is NADPH-dependent oxidoreductase (nfrA), found in Staphylococcus aureus (strain USA300).